Consider the following 366-residue polypeptide: Putative amino-acid transporter MJ1196 (366 aa).

The next 11 helical transmembrane spans lie at 14–34, 37–57, 87–107, 111–131, 141–161, 173–193, 205–225, 247–267, 291–311, 314–334, and 346–366; these read ITSI…LLFG, IIWG…PFAY, ILWL…EIVF, FNVS…ILGG, IFGI…GIKI, ILTI…TMPL, GLLV…LTIV, FLLA…LFTL, IPYY…IFDA, LVDM…LAVF, and LISM…FIIL.

Belongs to the amino acid-polyamine-organocation (APC) superfamily.

The protein localises to the cell membrane. The chain is Putative amino-acid transporter MJ1196 from Methanocaldococcus jannaschii (strain ATCC 43067 / DSM 2661 / JAL-1 / JCM 10045 / NBRC 100440) (Methanococcus jannaschii).